The chain runs to 382 residues: Carbamoyl phosphate synthase small chain (382 aa).

Residues 1–189 (MIKSALLVLE…GLPEAKSEDD (189 aa)) are CPSase. L-glutamine is bound by residues serine 47, glycine 241, and glycine 243. A Glutamine amidotransferase type-1 domain is found at 193–380 (HVVAYDFGAK…IELIEQYRQS (188 aa)). Cysteine 269 serves as the catalytic Nucleophile. L-glutamine-binding residues include leucine 270, glutamine 273, asparagine 311, glycine 313, and phenylalanine 314. Active-site residues include histidine 353 and glutamate 355.

It belongs to the CarA family. Composed of two chains; the small (or glutamine) chain promotes the hydrolysis of glutamine to ammonia, which is used by the large (or ammonia) chain to synthesize carbamoyl phosphate. Tetramer of heterodimers (alpha,beta)4.

The enzyme catalyses hydrogencarbonate + L-glutamine + 2 ATP + H2O = carbamoyl phosphate + L-glutamate + 2 ADP + phosphate + 2 H(+). It catalyses the reaction L-glutamine + H2O = L-glutamate + NH4(+). It functions in the pathway amino-acid biosynthesis; L-arginine biosynthesis; carbamoyl phosphate from bicarbonate: step 1/1. Its pathway is pyrimidine metabolism; UMP biosynthesis via de novo pathway; (S)-dihydroorotate from bicarbonate: step 1/3. Its function is as follows. Small subunit of the glutamine-dependent carbamoyl phosphate synthetase (CPSase). CPSase catalyzes the formation of carbamoyl phosphate from the ammonia moiety of glutamine, carbonate, and phosphate donated by ATP, constituting the first step of 2 biosynthetic pathways, one leading to arginine and/or urea and the other to pyrimidine nucleotides. The small subunit (glutamine amidotransferase) binds and cleaves glutamine to supply the large subunit with the substrate ammonia. In Salmonella typhimurium (strain LT2 / SGSC1412 / ATCC 700720), this protein is Carbamoyl phosphate synthase small chain.